The following is a 395-amino-acid chain: THP3 homolog C2A9.11c (395 aa).

The segment at 91 to 127 (LLSEEDEVDKKEKRRRRFENGSRSQNNAKSEELKVNP) is disordered. One can recognise a PCI domain in the interval 218–384 (DVGEYNQCQT…STDRFEKCMK (167 aa)).

The protein belongs to the THP3 family.

The protein localises to the cytoplasm. The protein resides in the nucleus. Required for transcription elongation. May also be involved in pre-mRNA splicing. The chain is THP3 homolog C2A9.11c from Schizosaccharomyces pombe (strain 972 / ATCC 24843) (Fission yeast).